Reading from the N-terminus, the 798-residue chain is Cold shock domain-containing protein E1 (798 aa).

Met1 carries the post-translational modification N-acetylmethionine. Residues 26-87 form the CSD 1 domain; that stretch reads ETGVIEKLLT…RTGKPIAVKL (62 aa). Lys81 carries the post-translational modification N6-acetyllysine. Lys91 participates in a covalent cross-link: Glycyl lysine isopeptide (Lys-Gly) (interchain with G-Cter in SUMO2). Ser123 is subject to Phosphoserine. Positions 136-179 constitute a CSD 2; truncated domain; the sequence is VFYLTYTPEDVEGNVQLETGDKINFVIDNNKHTGAVSARNIMLL. The CSD 3 domain occupies 186–245; sequence CQGVVCAMKEAFGFIERGDVVKEIFFHYSEFKGDLETLQPGDDVEFTIKDRNGKEVATDV. Ser276 is modified (phosphoserine). Residues 297–337 form the CSD 4; truncated domain; it reads LPFGDKDTKSKVTLLEGDHVRFNISTDRRDKLERATNIEVL. CSD domains follow at residues 349–410 and 447–507; these read EMGV…AIRI and NKGK…ATCV. Phosphoserine is present on Ser514. The CSD 7 domain maps to 519–579; it reads LLGYVATLKD…KGNKVSAEKV (61 aa). Residue Ser584 is modified to Phosphoserine. 2 consecutive CSD domains span residues 610–670 and 674–735; these read PTQT…AYNI and RRAT…ACNV. Positions 748 to 789 constitute an SUZ-C domain; sequence PRPDRLVNRLKNITLDDASAPRLMVLRQPRGPDNSMGFGAER. At Thr761 the chain carries Phosphothreonine.

Belongs to the UNR family. As to quaternary structure, component of a multi subunit autoregulatory ribonucleoprotein complex (ARC), at least composed of IGF2BP1, PABPC1 and CSDE1. Interacts with STRAP. Part of a complex associated with the FOS mCRD domain and consisting of PABPC1, PAIP1, HNRPD and SYNCRIP. The interaction with PABPC1 is direct and RNA-independent. Interacts with EIF4ENIF1/4E-T.

It is found in the cytoplasm. The protein resides in the stress granule. It localises to the P-body. Functionally, RNA-binding protein involved in translationally coupled mRNA turnover. Implicated with other RNA-binding proteins in the cytoplasmic deadenylation/translational and decay interplay of the FOS mRNA mediated by the major coding-region determinant of instability (mCRD) domain. Required for efficient formation of stress granules. Its function is as follows. (Microbial infection) Required for internal initiation of translation of human rhinovirus RNA. The sequence is that of Cold shock domain-containing protein E1 from Homo sapiens (Human).